A 396-amino-acid polypeptide reads, in one-letter code: Imidazolonepropionase (396 aa).

Positions 70 and 72 each coordinate Fe(3+). Zn(2+)-binding residues include histidine 70 and histidine 72. 4-imidazolone-5-propanoate contacts are provided by arginine 79, tyrosine 137, and histidine 164. Tyrosine 137 contributes to the N-formimidoyl-L-glutamate binding site. Fe(3+) is bound at residue histidine 227. Histidine 227 contributes to the Zn(2+) binding site. Glutamine 230 is a 4-imidazolone-5-propanoate binding site. Position 301 (aspartate 301) interacts with Fe(3+). Aspartate 301 lines the Zn(2+) pocket. Residues asparagine 303 and glycine 305 each contribute to the N-formimidoyl-L-glutamate site. Serine 306 contacts 4-imidazolone-5-propanoate.

This sequence belongs to the metallo-dependent hydrolases superfamily. HutI family. Zn(2+) is required as a cofactor. The cofactor is Fe(3+).

The protein localises to the cytoplasm. It carries out the reaction 4-imidazolone-5-propanoate + H2O = N-formimidoyl-L-glutamate. It functions in the pathway amino-acid degradation; L-histidine degradation into L-glutamate; N-formimidoyl-L-glutamate from L-histidine: step 3/3. Functionally, catalyzes the hydrolytic cleavage of the carbon-nitrogen bond in imidazolone-5-propanoate to yield N-formimidoyl-L-glutamate. It is the third step in the universal histidine degradation pathway. The protein is Imidazolonepropionase of Mycolicibacterium smegmatis (strain ATCC 700084 / mc(2)155) (Mycobacterium smegmatis).